The sequence spans 411 residues: MTQPFRSELSRYLRTATVGGSILLIAAAIALVWANSPVSDSYFALRDWQIGPQALHLNLTVGTWAQDGLLAVFFFVAGLELKRELVVGELADRKRALLPIIAACGGVVVPAIIAATIGAGTPGMDRGWAIPVATDIAFALGVLALTGSRIPTSARVFLLSLAVVDDLLAIVLIAVLFTSSIALLWLLGAIACLAVYAFAQHRRITTPLLYVPLALLTWYCMHDAGIHATLAGVALGLLTRVRRDPGERESPASRLEHRIQPLSAGVCVPVFALFASGVALSSELLGQLFTNPISQSVIAGLLVGKTVGIFGISWLAIRLGIAKKPRALGFRDMFALSVLGAIGFTVSLLVADLALAGIGDGSEAEIAKVAVLVTSLTASLIGSALLWRRGRAHAARKDDSDVQELPGGVDK.

The next 10 helical transmembrane spans lie at 18–38, 59–79, 97–117, 127–147, 167–187, 218–238, 261–281, 297–317, 338–358, and 366–386; these read VGGS…NSPV, LTVG…VAGL, LLPI…AATI, GWAI…ALTG, LLAI…LWLL, WYCM…LGLL, PLSA…VALS, VIAG…WLAI, VLGA…LAGI, and IAKV…SALL.

This sequence belongs to the NhaA Na(+)/H(+) (TC 2.A.33) antiporter family.

Its subcellular location is the cell membrane. It carries out the reaction Na(+)(in) + 2 H(+)(out) = Na(+)(out) + 2 H(+)(in). Na(+)/H(+) antiporter that extrudes sodium in exchange for external protons. The sequence is that of Na(+)/H(+) antiporter NhaA 2 from Rhodococcus jostii (strain RHA1).